Consider the following 833-residue polypeptide: Glycerol-3-phosphate acyltransferase (833 aa).

An HXXXXD motif motif is present at residues 309–314 (CHRSHI).

It belongs to the GPAT/DAPAT family.

The protein resides in the cell inner membrane. The catalysed reaction is sn-glycerol 3-phosphate + an acyl-CoA = a 1-acyl-sn-glycero-3-phosphate + CoA. Its pathway is phospholipid metabolism; CDP-diacylglycerol biosynthesis; CDP-diacylglycerol from sn-glycerol 3-phosphate: step 1/3. This chain is Glycerol-3-phosphate acyltransferase, found in Pseudomonas syringae pv. syringae (strain B728a).